A 214-amino-acid chain; its full sequence is Nicotinamidase (214 aa).

The active-site Proton acceptor is the D18. A divalent metal cation contacts are provided by D56, H58, H62, and H91. The active site involves K116. Catalysis depends on C161, which acts as the Nucleophile.

The protein belongs to the isochorismatase family. A divalent metal cation is required as a cofactor.

It catalyses the reaction nicotinamide + H2O = nicotinate + NH4(+). Its pathway is cofactor biosynthesis; nicotinate biosynthesis; nicotinate from nicotinamide: step 1/1. Its function is as follows. Catalyzes the deamidation of nicotinamide (NAM) into nicotinate (Na). Functions in the deamidating salvage pathway for production of NAD from nicotinamide. The sequence is that of Nicotinamidase from Acinetobacter baylyi (strain ATCC 33305 / BD413 / ADP1).